The primary structure comprises 173 residues: RNA pyrophosphohydrolase (173 aa).

A Nudix hydrolase domain is found at G6–K149. Positions G38–G59 match the Nudix box motif.

It belongs to the Nudix hydrolase family. RppH subfamily. A divalent metal cation is required as a cofactor.

Functionally, accelerates the degradation of transcripts by removing pyrophosphate from the 5'-end of triphosphorylated RNA, leading to a more labile monophosphorylated state that can stimulate subsequent ribonuclease cleavage. The protein is RNA pyrophosphohydrolase of Shewanella piezotolerans (strain WP3 / JCM 13877).